A 266-amino-acid chain; its full sequence is Undecaprenyl-diphosphatase (266 aa).

Transmembrane regions (helical) follow at residues 4–24 (LATI…PVSS), 41–61 (GSAA…LVAY), 79–99 (AVAF…VGAV), 108–128 (LESP…ILAI), 143–163 (MPLR…IPGV), 184–204 (AEFS…YSLW), 220–240 (IGLF…VAIV), and 243–263 (FGFA…LLWL).

It belongs to the UppP family.

Its subcellular location is the cell inner membrane. The catalysed reaction is di-trans,octa-cis-undecaprenyl diphosphate + H2O = di-trans,octa-cis-undecaprenyl phosphate + phosphate + H(+). In terms of biological role, catalyzes the dephosphorylation of undecaprenyl diphosphate (UPP). Confers resistance to bacitracin. The chain is Undecaprenyl-diphosphatase from Sphingopyxis alaskensis (strain DSM 13593 / LMG 18877 / RB2256) (Sphingomonas alaskensis).